Reading from the N-terminus, the 415-residue chain is Vascular endothelial growth factor C (415 aa).

The first 31 residues, 1–31, serve as a signal peptide directing secretion; the sequence is MHLLCFLSLACSLLAAALIPGPREAPATVAA. Residues 32–107 constitute a propeptide that is removed on maturation; it reads FESGLGFSEA…RTGDTVKLAA (76 aa). 3 disulfide bridges follow: Cys-127/Cys-169, Cys-158/Cys-205, and Cys-162/Cys-207. N-linked (GlcNAc...) asparagine glycosylation is found at Asn-171, Asn-201, and Asn-236. Residues 224 to 415 constitute a propeptide that is removed on maturation; sequence SLPATLPQCQ…PSYWKRPHLN (192 aa). A run of 4 repeats spans residues 276–291, 300–315, 324–339, and 343–358. The 4 X 16 AA repeats of C-X(10)-C-X-C-X(1,3)-C stretch occupies residues 276 to 358; sequence CGPNKELDED…LNPGKCACEC (83 aa).

Belongs to the PDGF/VEGF growth factor family. In terms of assembly, homodimer; non-covalent and antiparallel. Interacts with FLT4/VEGFR3; the interaction is required for FLT4/VEGFR3 homodimarization and activation. Post-translationally, undergoes a complex proteolytic maturation which generates a variety of processed secreted forms with increased activity toward VEGFR-3, but only the fully processed form could activate VEGFR-2. VEGF-C first form an antiparallel homodimer linked by disulfide bonds. Before secretion, a cleavage occurs between Arg-223 and Ser-224 producing a heterotetramer. The next extracellular step of the processing removes the N-terminal propeptide. Finally the mature VEGF-C is composed mostly of two VEGF homology domains (VHDs) bound by non-covalent interactions. In terms of tissue distribution, highly expressed in the lung, ovary, preputial gland and the adrenal gland. Expressed in the post-pubertal mammary glands.

Its subcellular location is the secreted. In terms of biological role, growth factor active in angiogenesis, and endothelial cell growth, stimulating their proliferation and migration and also has effects on the permeability of blood vessels. May function in angiogenesis of the venous and lymphatic vascular systems during embryogenesis, and also in the maintenance of differentiated lymphatic endothelium in adults. Binds and activates KDR/VEGFR2 and FLT4/VEGFR3 receptors. This chain is Vascular endothelial growth factor C (Vegfc), found in Rattus norvegicus (Rat).